The following is a 328-amino-acid chain: uncharacterized protein (328 aa).

Positions 1–22 (MPVKPNQPRPSTKQDPSSGASR) are disordered. The span at 9–21 (RPSTKQDPSSGAS) shows a compositional bias: polar residues. The next 6 membrane-spanning stretches (helical) occupy residues 66–86 (FSFL…GFVL), 126–146 (TVGL…IGNL), 176–196 (FLSL…TSVA), 221–241 (LIAL…ILWV), 255–275 (GTLM…VALP), and 290–310 (IGLM…AAWI).

It to E.coli YhjD.

Its subcellular location is the cell inner membrane. This is an uncharacterized protein from Dickeya dadantii (strain 3937) (Erwinia chrysanthemi (strain 3937)).